The sequence spans 509 residues: Probable malate:quinone oxidoreductase (509 aa).

Residues 490-509 (LGLNEKEPVSGASEKELVYS) are disordered. A compositionally biased stretch (basic and acidic residues) spans 493-509 (NEKEPVSGASEKELVYS).

Belongs to the MQO family. FAD serves as cofactor.

The catalysed reaction is (S)-malate + a quinone = a quinol + oxaloacetate. Its pathway is carbohydrate metabolism; tricarboxylic acid cycle; oxaloacetate from (S)-malate (quinone route): step 1/1. The chain is Probable malate:quinone oxidoreductase from Geobacillus sp. (strain WCH70).